The following is a 159-amino-acid chain: Keratin-associated protein 9-3 (159 aa).

16 consecutive repeat copies span residues 8 to 12, 13 to 17, 32 to 36, 37 to 41, 46 to 50, 51 to 55, 56 to 60, 61 to 65, 70 to 74, 75 to 79, 80 to 84, 85 to 89, 129 to 133, 134 to 138, 139 to 143, and 153 to 157. The interval 8-157 is 16 X 5 AA repeats of C-C-[RQVSHE]-[SPTN]-[TASPI]; sequence CCQPTCCRTT…TCVYSCCQPS (150 aa).

This sequence belongs to the KRTAP type 9 family. In terms of assembly, interacts with hair keratins.

In terms of biological role, in the hair cortex, hair keratin intermediate filaments are embedded in an interfilamentous matrix, consisting of hair keratin-associated proteins (KRTAP), which are essential for the formation of a rigid and resistant hair shaft through their extensive disulfide bond cross-linking with abundant cysteine residues of hair keratins. The matrix proteins include the high-sulfur and high-glycine-tyrosine keratins. In Homo sapiens (Human), this protein is Keratin-associated protein 9-3 (KRTAP9-3).